The following is a 442-amino-acid chain: ATP-dependent protease ATPase subunit HslU (442 aa).

ATP is bound by residues Ile-18, 60 to 65 (GVGKTE), Asp-255, Glu-320, and Arg-392.

The protein belongs to the ClpX chaperone family. HslU subfamily. A double ring-shaped homohexamer of HslV is capped on each side by a ring-shaped HslU homohexamer. The assembly of the HslU/HslV complex is dependent on binding of ATP.

Its subcellular location is the cytoplasm. Its function is as follows. ATPase subunit of a proteasome-like degradation complex; this subunit has chaperone activity. The binding of ATP and its subsequent hydrolysis by HslU are essential for unfolding of protein substrates subsequently hydrolyzed by HslV. HslU recognizes the N-terminal part of its protein substrates and unfolds these before they are guided to HslV for hydrolysis. The protein is ATP-dependent protease ATPase subunit HslU of Shewanella putrefaciens (strain CN-32 / ATCC BAA-453).